A 48-amino-acid polypeptide reads, in one-letter code: Entericidin B (48 aa).

A signal peptide spans methionine 1–alanine 21. The N-palmitoyl cysteine moiety is linked to residue cysteine 22. Cysteine 22 carries the S-diacylglycerol cysteine lipid modification.

The protein belongs to the EcnA/EcnB lipoprotein family.

Its subcellular location is the cell membrane. Functionally, plays a role in the bacteriolysis. Is activated under conditions of high osmolarity by the factor sigma S. Entericidin A functions as an antidote. The chain is Entericidin B (ecnB) from Escherichia coli O157:H7.